The chain runs to 155 residues: Nascent polypeptide-associated complex subunit beta (155 aa).

2 disordered regions span residues 1–39 (MDQA…DDKK) and 122–155 (QNMQ…SKVE). The span at 21 to 31 (TPRRKTKKVHK) shows a compositional bias: basic residues. In terms of domain architecture, NAC-A/B spans 34–99 (GTDDKKLQTS…GEEKELTELV (66 aa)). A compositionally biased stretch (basic and acidic residues) spans 125 to 135 (QKKEGEAKKEG).

This sequence belongs to the NAC-beta family. In terms of assembly, part of the nascent polypeptide-associated complex (NAC), consisting of EGD2 and EGD1. NAC associates with ribosomes via EGD1.

The protein localises to the cytoplasm. It is found in the nucleus. Its function is as follows. Component of the nascent polypeptide-associated complex (NAC), a dynamic component of the ribosomal exit tunnel, protecting the emerging polypeptides from interaction with other cytoplasmic proteins to ensure appropriate nascent protein targeting. The NAC complex also promotes mitochondrial protein import by enhancing productive ribosome interactions with the outer mitochondrial membrane and blocks the inappropriate interaction of ribosomes translating non-secretory nascent polypeptides with translocation sites in the membrane of the endoplasmic reticulum. EGD1 may act as a transcription factor that exert a negative effect on the expression of several genes that are transcribed by RNA polymerase II. This is Nascent polypeptide-associated complex subunit beta (EGD1) from Coccidioides immitis (strain RS) (Valley fever fungus).